The sequence spans 1183 residues: Chromosome partition protein Smc (1183 aa).

32 to 39 (PNGCGKTN) contacts ATP. Coiled coils occupy residues 167-322 (ITRY…ERLN) and 358-497 (AEFE…ALCN). The segment at 409-442 (KEHLEGSVNRLDQRKRDLERSMEQAEPERRRTSE) is disordered. The segment covering 419-442 (LDQRKRDLERSMEQAEPERRRTSE) has biased composition (basic and acidic residues). Positions 523–632 (LGCLSDLISV…VADLDAAEQL (110 aa)) constitute an SMC hinge domain. Coiled coils occupy residues 669-941 (GKKA…VMER) and 980-1025 (NELA…ALEK).

It belongs to the SMC family. Homodimer.

Its subcellular location is the cytoplasm. Required for chromosome condensation and partitioning. In Chlorobaculum tepidum (strain ATCC 49652 / DSM 12025 / NBRC 103806 / TLS) (Chlorobium tepidum), this protein is Chromosome partition protein Smc.